The sequence spans 309 residues: Ribosomal protein L11 methyltransferase (309 aa).

The S-adenosyl-L-methionine site is built by Thr144, Gly165, Asp187, and Asn235.

It belongs to the methyltransferase superfamily. PrmA family.

The protein resides in the cytoplasm. It catalyses the reaction L-lysyl-[protein] + 3 S-adenosyl-L-methionine = N(6),N(6),N(6)-trimethyl-L-lysyl-[protein] + 3 S-adenosyl-L-homocysteine + 3 H(+). Its function is as follows. Methylates ribosomal protein L11. In Prochlorococcus marinus (strain MIT 9215), this protein is Ribosomal protein L11 methyltransferase.